The primary structure comprises 119 residues: Beta-2-microglobulin (119 aa).

The first 20 residues, 1–20 (MSRSVALAVLALLSLSGLEA), serve as a signal peptide directing secretion. In terms of domain architecture, Ig-like C1-type spans 25-113 (PKIQVYSRHP…HVTLSQPKIV (89 aa)). Residues Cys-45 and Cys-100 are joined by a disulfide bond.

This sequence belongs to the beta-2-microglobulin family. Heterodimer of an alpha chain and a beta chain. Beta-2-microglobulin is the beta-chain of major histocompatibility complex class I molecules. Forms a heterotrimer with MR1 and a metabolite antigen.

It localises to the secreted. Functionally, component of the class I major histocompatibility complex (MHC). Involved in the presentation of peptide antigens to the immune system. This Pan troglodytes (Chimpanzee) protein is Beta-2-microglobulin (B2M).